We begin with the raw amino-acid sequence, 167 residues long: Small ribosomal subunit protein uS9 (167 aa).

The segment at 136–167 is disordered; the sequence is KRAGFLTRDPRATERKKYGLKKARKAPQYSKR. Residues 143-152 are compositionally biased toward basic and acidic residues; it reads RDPRATERKK. Over residues 153–167 the composition is skewed to basic residues; the sequence is YGLKKARKAPQYSKR.

It belongs to the universal ribosomal protein uS9 family.

The chain is Small ribosomal subunit protein uS9 from Nocardia farcinica (strain IFM 10152).